The primary structure comprises 340 residues: Lipopolysaccharide core biosynthesis glycosyltransferase LpsE (340 aa).

The protein belongs to the glycosyltransferase group 1 family. Glycosyltransferase 4 subfamily.

The protein operates within bacterial outer membrane biogenesis; LPS core biosynthesis. In Rhizobium meliloti (strain 1021) (Ensifer meliloti), this protein is Lipopolysaccharide core biosynthesis glycosyltransferase LpsE (lpsE).